Here is a 283-residue protein sequence, read N- to C-terminus: D-alanine aminotransferase (283 aa).

Tyr-32 lines the substrate pocket. Residue Arg-51 coordinates pyridoxal 5'-phosphate. Positions 99 and 101 each coordinate substrate. Lys-146 functions as the Proton acceptor in the catalytic mechanism. Residue Lys-146 is modified to N6-(pyridoxal phosphate)lysine. Glu-178 contributes to the pyridoxal 5'-phosphate binding site.

This sequence belongs to the class-IV pyridoxal-phosphate-dependent aminotransferase family. As to quaternary structure, homodimer. It depends on pyridoxal 5'-phosphate as a cofactor.

The catalysed reaction is D-alanine + 2-oxoglutarate = D-glutamate + pyruvate. Functionally, acts on the D-isomers of alanine, leucine, aspartate, glutamate, aminobutyrate, norvaline and asparagine. The enzyme transfers an amino group from a substrate D-amino acid to the pyridoxal phosphate cofactor to form pyridoxamine and an alpha-keto acid in the first half-reaction. The second half-reaction is the reverse of the first, transferring the amino group from the pyridoxamine to a second alpha-keto acid to form the product D-amino acid via a ping-pong mechanism. This is an important process in the formation of D-alanine and D-glutamate, which are essential bacterial cell wall components. The polypeptide is D-alanine aminotransferase (dat) (Lysinibacillus sphaericus (Bacillus sphaericus)).